The primary structure comprises 564 residues: Septation ring formation regulator EzrA (564 aa).

At 1–2 (MV) the chain is on the extracellular side. The helical transmembrane segment at 3–21 (FVISVILAIIVILTIGLIL) threads the bilayer. Topologically, residues 22–564 (RKRIYDKVDH…IEENQLTLNR (543 aa)) are cytoplasmic. 4 coiled-coil regions span residues 101–140 (ANNI…REEV), 168–215 (FDKK…MEQF), 251–436 (GFDK…KKSN), and 468–537 (DIAK…ELSL).

The protein belongs to the EzrA family.

The protein localises to the cell membrane. Functionally, negative regulator of FtsZ ring formation; modulates the frequency and position of FtsZ ring formation. Inhibits FtsZ ring formation at polar sites. Interacts either with FtsZ or with one of its binding partners to promote depolymerization. The chain is Septation ring formation regulator EzrA from Oceanobacillus iheyensis (strain DSM 14371 / CIP 107618 / JCM 11309 / KCTC 3954 / HTE831).